The sequence spans 339 residues: UDP-3-O-acylglucosamine N-acyltransferase (339 aa).

The active-site Proton acceptor is H239.

The protein belongs to the transferase hexapeptide repeat family. LpxD subfamily. Homotrimer.

It catalyses the reaction a UDP-3-O-[(3R)-3-hydroxyacyl]-alpha-D-glucosamine + a (3R)-hydroxyacyl-[ACP] = a UDP-2-N,3-O-bis[(3R)-3-hydroxyacyl]-alpha-D-glucosamine + holo-[ACP] + H(+). Its pathway is bacterial outer membrane biogenesis; LPS lipid A biosynthesis. Its function is as follows. Catalyzes the N-acylation of UDP-3-O-acylglucosamine using 3-hydroxyacyl-ACP as the acyl donor. Is involved in the biosynthesis of lipid A, a phosphorylated glycolipid that anchors the lipopolysaccharide to the outer membrane of the cell. In Aliivibrio fischeri (strain ATCC 700601 / ES114) (Vibrio fischeri), this protein is UDP-3-O-acylglucosamine N-acyltransferase.